A 347-amino-acid chain; its full sequence is Holliday junction branch migration complex subunit RuvB (347 aa).

The segment at Met-1–Tyr-183 is large ATPase domain (RuvB-L). Residues Leu-22, Arg-23, Gly-64, Lys-67, Thr-68, Ser-69, Glu-130 to Phe-132, Arg-173, Tyr-183, and Arg-220 contribute to the ATP site. Thr-68 contacts Mg(2+). The tract at residues Ser-184 to Glu-254 is small ATPAse domain (RuvB-S). The segment at His-257 to Thr-347 is head domain (RuvB-H). Arg-312 and Arg-317 together coordinate DNA.

Belongs to the RuvB family. In terms of assembly, homohexamer. Forms an RuvA(8)-RuvB(12)-Holliday junction (HJ) complex. HJ DNA is sandwiched between 2 RuvA tetramers; dsDNA enters through RuvA and exits via RuvB. An RuvB hexamer assembles on each DNA strand where it exits the tetramer. Each RuvB hexamer is contacted by two RuvA subunits (via domain III) on 2 adjacent RuvB subunits; this complex drives branch migration. In the full resolvosome a probable DNA-RuvA(4)-RuvB(12)-RuvC(2) complex forms which resolves the HJ.

The protein resides in the cytoplasm. The catalysed reaction is ATP + H2O = ADP + phosphate + H(+). Functionally, the RuvA-RuvB-RuvC complex processes Holliday junction (HJ) DNA during genetic recombination and DNA repair, while the RuvA-RuvB complex plays an important role in the rescue of blocked DNA replication forks via replication fork reversal (RFR). RuvA specifically binds to HJ cruciform DNA, conferring on it an open structure. The RuvB hexamer acts as an ATP-dependent pump, pulling dsDNA into and through the RuvAB complex. RuvB forms 2 homohexamers on either side of HJ DNA bound by 1 or 2 RuvA tetramers; 4 subunits per hexamer contact DNA at a time. Coordinated motions by a converter formed by DNA-disengaged RuvB subunits stimulates ATP hydrolysis and nucleotide exchange. Immobilization of the converter enables RuvB to convert the ATP-contained energy into a lever motion, pulling 2 nucleotides of DNA out of the RuvA tetramer per ATP hydrolyzed, thus driving DNA branch migration. The RuvB motors rotate together with the DNA substrate, which together with the progressing nucleotide cycle form the mechanistic basis for DNA recombination by continuous HJ branch migration. Branch migration allows RuvC to scan DNA until it finds its consensus sequence, where it cleaves and resolves cruciform DNA. The chain is Holliday junction branch migration complex subunit RuvB from Roseiflexus castenholzii (strain DSM 13941 / HLO8).